Here is a 429-residue protein sequence, read N- to C-terminus: Glucose-6-phosphate exchanger SLC37A4 (429 aa).

A run of 10 helical transmembrane segments spans residues 84 to 104, 105 to 125, 139 to 159, 167 to 187, 219 to 239, 260 to 280, 302 to 322, 329 to 349, 368 to 388, and 394 to 414; these read LLLV…PVFA, ALWF…GKVL, AILS…ATIL, STLA…LLLI, ELLL…VFGV, LVGS…SIAA, GLLL…RVTV, LWIL…IALF, IVGL…STIA, and STAF…FFLL.

It belongs to the major facilitator superfamily. Organophosphate:Pi antiporter (OPA) (TC 2.A.1.4) family. As to expression, mostly expressed in liver and kidney.

The protein resides in the endoplasmic reticulum membrane. It catalyses the reaction D-glucose 6-phosphate(in) + phosphate(out) = D-glucose 6-phosphate(out) + phosphate(in). Inhibited by vanadate and chlorogenic acid. Its function is as follows. Inorganic phosphate and glucose-6-phosphate antiporter of the endoplasmic reticulum. Transports cytoplasmic glucose-6-phosphate into the lumen of the endoplasmic reticulum and translocates inorganic phosphate into the opposite direction. Forms with glucose-6-phosphatase the complex responsible for glucose production through glycogenolysis and gluconeogenesis. Hence, it plays a central role in homeostatic regulation of blood glucose levels. This Homo sapiens (Human) protein is Glucose-6-phosphate exchanger SLC37A4.